Reading from the N-terminus, the 70-residue chain is Cold shock-like protein (70 aa).

A CSD domain is found at 5–65 (GTVKWFSKDK…DTKGPRAKNV (61 aa)).

The protein resides in the cytoplasm. This Aquifex aeolicus (strain VF5) protein is Cold shock-like protein (csp).